The chain runs to 171 residues: CDP-archaeol synthase (171 aa).

The next 4 membrane-spanning stretches (helical) occupy residues 11 to 31 (VLYVIYFMLPAYMANISGLVF), 65 to 85 (VGLVVGIIQGLLSGSIIIGVI), 129 to 149 (LILVSPIVVLPIDYIILIMLI), and 151 to 171 (LVLHLSANIIAYLLGMKDVWY).

The protein belongs to the CDP-archaeol synthase family. Mg(2+) is required as a cofactor.

The protein resides in the cell membrane. It catalyses the reaction 2,3-bis-O-(geranylgeranyl)-sn-glycerol 1-phosphate + CTP + H(+) = CDP-2,3-bis-O-(geranylgeranyl)-sn-glycerol + diphosphate. The protein operates within membrane lipid metabolism; glycerophospholipid metabolism. Catalyzes the formation of CDP-2,3-bis-(O-geranylgeranyl)-sn-glycerol (CDP-archaeol) from 2,3-bis-(O-geranylgeranyl)-sn-glycerol 1-phosphate (DGGGP) and CTP. This reaction is the third ether-bond-formation step in the biosynthesis of archaeal membrane lipids. This Methanothermobacter thermautotrophicus (strain ATCC 29096 / DSM 1053 / JCM 10044 / NBRC 100330 / Delta H) (Methanobacterium thermoautotrophicum) protein is CDP-archaeol synthase.